Reading from the N-terminus, the 448-residue chain is Adenylosuccinate synthetase (448 aa).

GTP contacts are provided by residues 22 to 28 (GDEGKGK) and 50 to 52 (GHT). The active-site Proton acceptor is the Asp-23. Positions 23 and 50 each coordinate Mg(2+). Residues 23-26 (DEGK), 48-51 (NAGH), Thr-139, Arg-153, Gln-234, Thr-249, and Arg-321 contribute to the IMP site. Catalysis depends on His-51, which acts as the Proton donor. 317–323 (SVTGRPR) lines the substrate pocket. Residues Arg-323, 349–351 (KLD), and 431–433 (STG) each bind GTP.

It belongs to the adenylosuccinate synthetase family. As to quaternary structure, homodimer. Mg(2+) is required as a cofactor.

It localises to the cytoplasm. The catalysed reaction is IMP + L-aspartate + GTP = N(6)-(1,2-dicarboxyethyl)-AMP + GDP + phosphate + 2 H(+). Its pathway is purine metabolism; AMP biosynthesis via de novo pathway; AMP from IMP: step 1/2. Plays an important role in the de novo pathway of purine nucleotide biosynthesis. Catalyzes the first committed step in the biosynthesis of AMP from IMP. This is Adenylosuccinate synthetase from Burkholderia thailandensis (strain ATCC 700388 / DSM 13276 / CCUG 48851 / CIP 106301 / E264).